A 255-amino-acid polypeptide reads, in one-letter code: NAD kinase (255 aa).

Residue Asp-44 is the Proton acceptor of the active site. NAD(+) contacts are provided by residues 44–45 (DG), His-49, 114–115 (NE), Asp-144, Ala-152, 155–160 (SAYNLS), and Gln-216.

Belongs to the NAD kinase family. The cofactor is a divalent metal cation.

The protein localises to the cytoplasm. The enzyme catalyses NAD(+) + ATP = ADP + NADP(+) + H(+). Its function is as follows. Involved in the regulation of the intracellular balance of NAD and NADP, and is a key enzyme in the biosynthesis of NADP. Catalyzes specifically the phosphorylation on 2'-hydroxyl of the adenosine moiety of NAD to yield NADP. The protein is NAD kinase of Rickettsia akari (strain Hartford).